Consider the following 472-residue polypeptide: Siroheme synthase (472 aa).

The segment at 1–207 is precorrin-2 dehydrogenase /sirohydrochlorin ferrochelatase; it reads MNFLPIFLDI…GKDQAAKAWL (207 aa). NAD(+)-binding positions include 22-23 and 43-44; these read EV and PR. The residue at position 132 (S132) is a Phosphoserine. Positions 221–472 are uroporphyrinogen-III C-methyltransferase; it reads GEVYLVGAGP…QPEGNLPGAE (252 aa). P230 contacts S-adenosyl-L-methionine. Residue D253 is the Proton acceptor of the active site. Residue K275 is the Proton donor of the active site. Residues 306 to 308, I311, 336 to 337, M388, and G417 each bind S-adenosyl-L-methionine; these read GGD and TA.

It in the N-terminal section; belongs to the precorrin-2 dehydrogenase / sirohydrochlorin ferrochelatase family. This sequence in the C-terminal section; belongs to the precorrin methyltransferase family.

It catalyses the reaction uroporphyrinogen III + 2 S-adenosyl-L-methionine = precorrin-2 + 2 S-adenosyl-L-homocysteine + H(+). The enzyme catalyses precorrin-2 + NAD(+) = sirohydrochlorin + NADH + 2 H(+). The catalysed reaction is siroheme + 2 H(+) = sirohydrochlorin + Fe(2+). Its pathway is cofactor biosynthesis; adenosylcobalamin biosynthesis; precorrin-2 from uroporphyrinogen III: step 1/1. It participates in cofactor biosynthesis; adenosylcobalamin biosynthesis; sirohydrochlorin from precorrin-2: step 1/1. The protein operates within porphyrin-containing compound metabolism; siroheme biosynthesis; precorrin-2 from uroporphyrinogen III: step 1/1. It functions in the pathway porphyrin-containing compound metabolism; siroheme biosynthesis; siroheme from sirohydrochlorin: step 1/1. Its pathway is porphyrin-containing compound metabolism; siroheme biosynthesis; sirohydrochlorin from precorrin-2: step 1/1. In terms of biological role, multifunctional enzyme that catalyzes the SAM-dependent methylations of uroporphyrinogen III at position C-2 and C-7 to form precorrin-2 via precorrin-1. Then it catalyzes the NAD-dependent ring dehydrogenation of precorrin-2 to yield sirohydrochlorin. Finally, it catalyzes the ferrochelation of sirohydrochlorin to yield siroheme. In Nitrosospira multiformis (strain ATCC 25196 / NCIMB 11849 / C 71), this protein is Siroheme synthase.